The following is a 98-amino-acid chain: NADH-ubiquinone oxidoreductase chain 4L (98 aa).

The next 3 membrane-spanning stretches (helical) occupy residues 2–22, 29–49, and 61–81; these read PSIS…MLMF, SLLC…LTIL, and ILLL…LVMV.

Belongs to the complex I subunit 4L family. Core subunit of respiratory chain NADH dehydrogenase (Complex I) which is composed of 45 different subunits.

The protein localises to the mitochondrion inner membrane. It catalyses the reaction a ubiquinone + NADH + 5 H(+)(in) = a ubiquinol + NAD(+) + 4 H(+)(out). Core subunit of the mitochondrial membrane respiratory chain NADH dehydrogenase (Complex I) which catalyzes electron transfer from NADH through the respiratory chain, using ubiquinone as an electron acceptor. Part of the enzyme membrane arm which is embedded in the lipid bilayer and involved in proton translocation. This is NADH-ubiquinone oxidoreductase chain 4L (MT-ND4L) from Microcebus mittermeieri (Mittermeier's mouse lemur).